The sequence spans 220 residues: Uracil-DNA glycosylase (220 aa).

The Proton acceptor role is filled by D61.

The protein belongs to the uracil-DNA glycosylase (UDG) superfamily. UNG family.

The protein localises to the cytoplasm. The enzyme catalyses Hydrolyzes single-stranded DNA or mismatched double-stranded DNA and polynucleotides, releasing free uracil.. In terms of biological role, excises uracil residues from the DNA which can arise as a result of misincorporation of dUMP residues by DNA polymerase or due to deamination of cytosine. The sequence is that of Uracil-DNA glycosylase from Pseudoalteromonas translucida (strain TAC 125).